A 95-amino-acid chain; its full sequence is Putative pterin-4-alpha-carbinolamine dehydratase (95 aa).

It belongs to the pterin-4-alpha-carbinolamine dehydratase family.

It carries out the reaction (4aS,6R)-4a-hydroxy-L-erythro-5,6,7,8-tetrahydrobiopterin = (6R)-L-erythro-6,7-dihydrobiopterin + H2O. This Thermosynechococcus vestitus (strain NIES-2133 / IAM M-273 / BP-1) protein is Putative pterin-4-alpha-carbinolamine dehydratase.